The chain runs to 561 residues: MSQEFDYIIIGAGSAGNVLATRLTEDADVSVLLLEAGGPDYRFDFRTQMPAALAFPLQGRRYNWAYETDPEPYMNNRRMECGRGKGLGGSSLINGMCYIRGNALDFDGWAKEPGLEDWSYLDCLPYFRKAETRDIGPNDYHGGDGPVSVTTPKAGNNPLFHAMVEAGVQAGYPRTDDLNGYQQEGFGPMDRTVTPEGRRAATGRGYLDQARGRPNLTIVTHALSDRILFSGKRAIGVSYLVGNGDNPVTAHARREVLVCSGAIASPQLLQRSGVGPAALLRDLDIPVVHDLPGVGANLQDHLELYLQYACKQPVSIYPATKWWNQPAIGAQWLFLGKGLGASNQFEAGGFIRTREAFEWPNIQFHFLPVAINYNGSKGVQEHGFQAHMGSMRSPSRGRIHLKSRDPRQHPSILFNYMSHEQDWQEFRDGIRLTREIMNQPALDPYRGRELSPGVSVQSDAELDEFIRNHAETAFHPSCSCKMGSDDMAVVDGQGRVHGMEGLRVVDASIMPLIITGNLNATTIMMAEKIADRIRGRQPLPRSTAKYYVAGDAPVRGNPVRA.

6 to 35 (DYIIIGAGSAGNVLATRLTEDADVSVLLLE) provides a ligand contact to FAD. Residue His-475 is the Proton acceptor of the active site.

This sequence belongs to the GMC oxidoreductase family. FAD serves as cofactor.

The catalysed reaction is choline + A = betaine aldehyde + AH2. It catalyses the reaction betaine aldehyde + NAD(+) + H2O = glycine betaine + NADH + 2 H(+). Its pathway is amine and polyamine biosynthesis; betaine biosynthesis via choline pathway; betaine aldehyde from choline (cytochrome c reductase route): step 1/1. Functionally, involved in the biosynthesis of the osmoprotectant glycine betaine. Catalyzes the oxidation of choline to betaine aldehyde and betaine aldehyde to glycine betaine at the same rate. This is Oxygen-dependent choline dehydrogenase from Pseudomonas aeruginosa (strain LESB58).